Here is a 149-residue protein sequence, read N- to C-terminus: D-aminoacyl-tRNA deacylase (149 aa).

The Gly-cisPro motif, important for rejection of L-amino acids signature appears at Gly-137–Pro-138.

This sequence belongs to the DTD family. Homodimer.

The protein localises to the cytoplasm. It carries out the reaction glycyl-tRNA(Ala) + H2O = tRNA(Ala) + glycine + H(+). It catalyses the reaction a D-aminoacyl-tRNA + H2O = a tRNA + a D-alpha-amino acid + H(+). Its function is as follows. An aminoacyl-tRNA editing enzyme that deacylates mischarged D-aminoacyl-tRNAs. Also deacylates mischarged glycyl-tRNA(Ala), protecting cells against glycine mischarging by AlaRS. Acts via tRNA-based rather than protein-based catalysis; rejects L-amino acids rather than detecting D-amino acids in the active site. By recycling D-aminoacyl-tRNA to D-amino acids and free tRNA molecules, this enzyme counteracts the toxicity associated with the formation of D-aminoacyl-tRNA entities in vivo and helps enforce protein L-homochirality. This Clostridium tetani (strain Massachusetts / E88) protein is D-aminoacyl-tRNA deacylase.